A 251-amino-acid chain; its full sequence is Flap endonuclease Xni (251 aa).

D104 provides a ligand contact to Mg(2+). The 89-residue stretch at 160-248 (VSPQQLSDYW…ALTGNLQQLR (89 aa)) folds into the 5'-3' exonuclease domain. K(+)-binding residues include L171, A172, P180, V182, and I185. The segment at 184 to 189 (GIGPKT) is interaction with DNA.

Belongs to the Xni family. Requires Mg(2+) as cofactor. It depends on K(+) as a cofactor.

Functionally, has flap endonuclease activity. During DNA replication, flap endonucleases cleave the 5'-overhanging flap structure that is generated by displacement synthesis when DNA polymerase encounters the 5'-end of a downstream Okazaki fragment. This chain is Flap endonuclease Xni, found in Serratia proteamaculans (strain 568).